Here is a 267-residue protein sequence, read N- to C-terminus: uncharacterized protein (267 aa).

This is an uncharacterized protein from Saccharomyces cerevisiae (strain ATCC 204508 / S288c) (Baker's yeast).